The primary structure comprises 183 residues: Small ribosomal subunit protein uS4 (183 aa).

Residues 106 to 168 form the S4 RNA-binding domain; it reads RRLETLVYKK…ETSPFTDENH (63 aa). Positions 158–183 are disordered; the sequence is NETSPFTDENHPLRMEMSGTKEEENE. A compositionally biased stretch (basic and acidic residues) spans 165 to 183; it reads DENHPLRMEMSGTKEEENE.

It belongs to the universal ribosomal protein uS4 family. In terms of assembly, part of the 30S ribosomal subunit. Contacts protein S5. The interaction surface between S4 and S5 is involved in control of translational fidelity.

In terms of biological role, one of the primary rRNA binding proteins, it binds directly to 16S rRNA where it nucleates assembly of the body of the 30S subunit. Its function is as follows. With S5 and S12 plays an important role in translational accuracy. This is Small ribosomal subunit protein uS4 from Picrophilus torridus (strain ATCC 700027 / DSM 9790 / JCM 10055 / NBRC 100828 / KAW 2/3).